The sequence spans 433 residues: Enolase (433 aa).

(2R)-2-phosphoglycerate is bound at residue Q166. Residue E208 is the Proton donor of the active site. Mg(2+) contacts are provided by D245, E290, and D317. K342, R371, S372, and K393 together coordinate (2R)-2-phosphoglycerate. The Proton acceptor role is filled by K342.

This sequence belongs to the enolase family. Mg(2+) is required as a cofactor.

It localises to the cytoplasm. It is found in the secreted. Its subcellular location is the cell surface. The catalysed reaction is (2R)-2-phosphoglycerate = phosphoenolpyruvate + H2O. It functions in the pathway carbohydrate degradation; glycolysis; pyruvate from D-glyceraldehyde 3-phosphate: step 4/5. Functionally, catalyzes the reversible conversion of 2-phosphoglycerate (2-PG) into phosphoenolpyruvate (PEP). It is essential for the degradation of carbohydrates via glycolysis. In Clostridium novyi (strain NT), this protein is Enolase.